The following is a 564-amino-acid chain: Nucleoprotein (564 aa).

Residues 54-236 form a binding site for the cap structure m7GTP region; it reads LRKTKRGEED…VTKDESSINI (183 aa). D380 and E382 together coordinate Mn(2+). Positions 390, 497, 500, and 525 each coordinate Zn(2+). D529 lines the Mn(2+) pocket.

It belongs to the arenaviridae nucleocapsid protein family. In terms of assembly, homomultimerizes to form the nucleocapsid. Binds to viral genomic RNA. Interacts with glycoprotein G2. Interacts with protein Z; this interaction probably directs the encapsidated genome to budding sites. Interacts with protein L; this interaction does not interfere with Z-L interaction. Interacts with host IKBKE (via Protein kinase domain); the interaction inhibits IKBKE kinase activity.

The protein localises to the virion. Its subcellular location is the host cytoplasm. In terms of biological role, encapsidates the genome, protecting it from nucleases. The encapsidated genomic RNA is termed the nucleocapsid (NC). Serves as template for viral transcription and replication. The increased presence of protein N in host cell does not seem to trigger the switch from transcription to replication as observed in other negative strain RNA viruses. Through the interaction with host IKBKE, strongly inhibits the phosphorylation and nuclear translocation of host IRF3, a protein involved in interferon activation pathway, leading to the inhibition of interferon-beta and IRF3-dependent promoters activation. Also encodes a functional 3'-5' exoribonuclease that degrades preferentially dsRNA substrates and thereby participates in the suppression of interferon induction. The protein is Nucleoprotein of Akodon azarae (Azara's grass mouse).